A 509-amino-acid chain; its full sequence is H/ACA ribonucleoprotein complex subunit DKC1 (509 aa).

Residues 1 to 25 are disordered; sequence MADAEAAMTFPKKHKKKKERKPLPE. The residue at position 2 (Ala-2) is an N-acetylalanine. A nucleolar localization region spans residues 2 to 22; sequence ADAEAAMTFPKKHKKKKERKP. The segment covering 11–20 has biased composition (basic residues); it reads PKKHKKKKER. Glycyl lysine isopeptide (Lys-Gly) (interchain with G-Cter in SUMO2) cross-links involve residues Lys-21, Lys-40, and Lys-44. Asp-126 functions as the Nucleophile in the catalytic mechanism. Lys-192 is covalently cross-linked (Glycyl lysine isopeptide (Lys-Gly) (interchain with G-Cter in SUMO2)). The PUA domain occupies 297 to 372; that stretch reads HKRLVMKDSA…VVAKIKRVIM (76 aa). A disordered region spans residues 381–509; sequence WGLGPKASQK…KARAAEELSG (129 aa). Position 388 is a phosphoserine (Ser-388). Residues Lys-395 and Lys-425 each participate in a glycyl lysine isopeptide (Lys-Gly) (interchain with G-Cter in SUMO2) cross-link. The segment covering 416-425 has biased composition (basic and acidic residues); sequence DYVDYSDSSK. A nuclear and nucleolar localization region spans residues 447–509; sequence KRKRDSDSDA…KARAAEELSG (63 aa). Residues Ser-452 and Ser-454 each carry the phosphoserine modification. Thr-460 is modified (phosphothreonine). Over residues 466-475 the composition is skewed to basic residues; the sequence is RVKKEKKKKK. Residues 481-490 are compositionally biased toward acidic residues; sequence GEEAAEDGDG. Ser-508 carries the phosphoserine modification.

It belongs to the pseudouridine synthase TruB family. As to quaternary structure, part of the H/ACA small nucleolar ribonucleoprotein (H/ACA snoRNP) complex, which contains NHP2/NOLA2, GAR1/NOLA1, NOP10/NOLA3, and DKC1/NOLA4, which is presumed to be the catalytic subunit. The complex contains a stable core formed by binding of one or two NOP10-DKC1 heterodimers to NHP2; GAR1 subsequently binds to this core via DKC1. The complex binds a box H/ACA small nucleolar RNA (snoRNA), which may target the specific site of modification within the RNA substrate. During assembly, the complex contains NAF1 instead of GAR1/NOLA1. The complex also interacts with TERC, which contains a 3'-terminal domain related to the box H/ACA snoRNAs. Specific interactions with snoRNAs or TERC are mediated by GAR1 and NHP2. Associates with NOLC1/NOPP140. H/ACA snoRNPs interact with the SMN complex, consisting of SMN1 or SMN2, GEMIN2/SIP1, DDX20/GEMIN3, and GEMIN4. This is mediated by interaction between GAR1 and SMN1 or SMN2. The SMN complex may be required for correct assembly of the H/ACA snoRNP complex. Component of the telomerase holoenzyme complex composed of one molecule of TERT, one molecule of WRAP53/TCAB1, two molecules of H/ACA ribonucleoprotein complex subunits DKC1, NOP10, NHP2 and GAR1, and a telomerase RNA template component (TERC). The telomerase holoenzyme complex is associated with TEP1, SMG6/EST1A and POT1. Interacts with SHQ1; this interaction may lead to the stabilization of DKC1, from the time of its synthesis until its association with NOP10, NHP2, and NAF1 at the nascent H/ACA RNA. Interacts with HMBOX1. Interacts with DHX36.

The protein resides in the nucleus. Its subcellular location is the nucleolus. It localises to the cajal body. The catalysed reaction is uridine in 5S rRNA = pseudouridine in 5S rRNA. Functionally, catalytic subunit of H/ACA small nucleolar ribonucleoprotein (H/ACA snoRNP) complex, which catalyzes pseudouridylation of rRNA. This involves the isomerization of uridine such that the ribose is subsequently attached to C5, instead of the normal N1. Each rRNA can contain up to 100 pseudouridine ('psi') residues, which may serve to stabilize the conformation of rRNAs. Required for ribosome biogenesis and telomere maintenance. Also required for correct processing or intranuclear trafficking of TERC, the RNA component of the telomerase reverse transcriptase (TERT) holoenzyme. This Rattus norvegicus (Rat) protein is H/ACA ribonucleoprotein complex subunit DKC1 (Dkc1).